We begin with the raw amino-acid sequence, 407 residues long: Argininosuccinate synthase (407 aa).

ATP contacts are provided by residues 16–24 and A44; that span reads AYSGGLDTS. The L-citrulline site is built by Y96 and S101. An ATP-binding site is contributed by G126. L-aspartate is bound by residues T128, N132, and D133. N132 is a binding site for L-citrulline. R136, S185, S194, E270, and Y282 together coordinate L-citrulline.

It belongs to the argininosuccinate synthase family. Type 1 subfamily. Homotetramer.

The protein resides in the cytoplasm. It carries out the reaction L-citrulline + L-aspartate + ATP = 2-(N(omega)-L-arginino)succinate + AMP + diphosphate + H(+). It functions in the pathway amino-acid biosynthesis; L-arginine biosynthesis; L-arginine from L-ornithine and carbamoyl phosphate: step 2/3. The polypeptide is Argininosuccinate synthase (Shewanella sp. (strain ANA-3)).